A 311-amino-acid chain; its full sequence is Cell division protein ZipA (311 aa).

Residues methionine 1–arginine 5 are Periplasmic-facing. The helical transmembrane segment at phenylalanine 6–threonine 26 threads the bilayer. Over serine 27 to alanine 311 the chain is Cytoplasmic. Over residues lysine 32–glutamate 54 the composition is skewed to basic and acidic residues. The segment at lysine 32–glutamate 60 is disordered.

It belongs to the ZipA family. Interacts with FtsZ via their C-terminal domains.

The protein resides in the cell inner membrane. Functionally, essential cell division protein that stabilizes the FtsZ protofilaments by cross-linking them and that serves as a cytoplasmic membrane anchor for the Z ring. Also required for the recruitment to the septal ring of downstream cell division proteins. The sequence is that of Cell division protein ZipA from Vibrio vulnificus (strain YJ016).